Consider the following 73-residue polypeptide: DNA-directed RNA polymerase subunit omega (73 aa).

It belongs to the RNA polymerase subunit omega family. The RNAP catalytic core consists of 2 alpha, 1 beta, 1 beta' and 1 omega subunit. When a sigma factor is associated with the core the holoenzyme is formed, which can initiate transcription.

The enzyme catalyses RNA(n) + a ribonucleoside 5'-triphosphate = RNA(n+1) + diphosphate. In terms of biological role, promotes RNA polymerase assembly. Latches the N- and C-terminal regions of the beta' subunit thereby facilitating its interaction with the beta and alpha subunits. This is DNA-directed RNA polymerase subunit omega from Maridesulfovibrio salexigens (strain ATCC 14822 / DSM 2638 / NCIMB 8403 / VKM B-1763) (Desulfovibrio salexigens).